A 122-amino-acid chain; its full sequence is U1 small nuclear ribonucleoprotein C (122 aa).

Residues 4–36 form a Matrin-type zinc finger; it reads YFCDYCDTYLTHDSPSVRKTHCSGRKHKDNVKM.

This sequence belongs to the U1 small nuclear ribonucleoprotein C family. As to quaternary structure, U1 snRNP is composed of the 7 core Sm proteins B/B', D1, D2, D3, E, F and G that assemble in a heptameric protein ring on the Sm site of the small nuclear RNA to form the core snRNP, and at least 3 U1 snRNP-specific proteins U1-70K, U1-A and U1-C. U1-C interacts with U1 snRNA and the 5' splice-site region of the pre-mRNA.

It localises to the nucleus. Functionally, component of the spliceosomal U1 snRNP, which is essential for recognition of the pre-mRNA 5' splice-site and the subsequent assembly of the spliceosome. U1-C is directly involved in initial 5' splice-site recognition for both constitutive and regulated alternative splicing. The interaction with the 5' splice-site seems to precede base-pairing between the pre-mRNA and the U1 snRNA. Stimulates commitment or early (E) complex formation by stabilizing the base pairing of the 5' end of the U1 snRNA and the 5' splice-site region. This is U1 small nuclear ribonucleoprotein C from Ciona intestinalis (Transparent sea squirt).